Consider the following 120-residue polypeptide: Protein VraC (120 aa).

The polypeptide is Protein VraC (Staphylococcus epidermidis (strain ATCC 35984 / DSM 28319 / BCRC 17069 / CCUG 31568 / BM 3577 / RP62A)).